The chain runs to 143 residues: Histone H2AX (143 aa).

The interval 1–22 (MSGRGKTGGKARAKAKSRSSRA) is disordered. N-acetylserine is present on serine 2. A Phosphoserine modification is found at serine 2. Residues lysine 6 and lysine 10 each carry the N6-acetyllysine modification. Over residues 7–19 (TGGKARAKAKSRS) the composition is skewed to basic residues. The residue at position 10 (lysine 10) is an N6-lactoyllysine; alternate. Residues lysine 14 and lysine 16 each participate in a glycyl lysine isopeptide (Lys-Gly) (interchain with G-Cter in ubiquitin) cross-link. Lysine 37 is modified (N6-acetyllysine). A Glycyl lysine isopeptide (Lys-Gly) (interchain with G-Cter in ubiquitin) cross-link involves residue lysine 120. Residues 121–143 (TSATVGPKAPSGGKKATQASQEY) are disordered. Position 122 is a phosphoserine (serine 122). Glycyl lysine isopeptide (Lys-Gly) (interchain with G-Cter in SUMO2) cross-links involve residues lysine 128 and lysine 135. Serine 140 is subject to Phosphoserine; by ATM, ATR and PRKDC. Positions 140–141 (SQ) match the [ST]-Q motif motif. At tyrosine 143 the chain carries Phosphotyrosine; by WSTF.

The protein belongs to the histone H2A family. As to quaternary structure, the nucleosome is a histone octamer containing two molecules each of H2A, H2B, H3 and H4 assembled in one H3-H4 heterotetramer and two H2A-H2B heterodimers. The octamer wraps approximately 147 bp of DNA. Interacts with numerous proteins required for DNA damage signaling and repair when phosphorylated on Ser-140. These include MDC1, TP53BP1, BRCA1 and the MRN complex, composed of MRE11, RAD50, and NBN. Interaction with the MRN complex is mediated at least in part by NBN. Also interacts with DHX9/NDHII when phosphorylated on Ser-140 and MCPH1 when phosphorylated at Ser-140 or Tyr-143. Interacts with ARRB2; the interaction is detected in the nucleus upon OR1D2 stimulation. Interacts with WRAP53/TCAB1. Interacts with HDGFL2. Interacts with DNA damage up-regulated protein DDUP. Forms a complex with DDUP and RAD18 following DDUP phosphorylation. (Microbial infection) Interacts with Epstein-Barr virus protein EBNA6. In terms of processing, phosphorylated by VRK1. Phosphorylated on Ser-140 (to form gamma-H2AX or H2AX139ph) in response to DNA double strand breaks (DSBs) generated by exogenous genotoxic agents and by stalled replication forks, and may also occur during meiotic recombination events and immunoglobulin class switching in lymphocytes. Phosphorylation can extend up to several thousand nucleosomes from the actual site of the DSB and may mark the surrounding chromatin for recruitment of proteins required for DNA damage signaling and repair. Widespread phosphorylation may also serve to amplify the damage signal or aid repair of persistent lesions. Phosphorylation of Ser-140 (H2AX139ph) in response to ionizing radiation is mediated by both ATM and PRKDC while defects in DNA replication induce Ser-140 phosphorylation (H2AX139ph) subsequent to activation of ATR and PRKDC. Dephosphorylation of Ser-140 by PP2A is required for DNA DSB repair. In meiosis, Ser-140 phosphorylation (H2AX139ph) may occur at synaptonemal complexes during leptotene as an ATM-dependent response to the formation of programmed DSBs by SPO11. Ser-140 phosphorylation (H2AX139ph) may subsequently occurs at unsynapsed regions of both autosomes and the XY bivalent during zygotene, downstream of ATR and BRCA1 activation. Ser-140 phosphorylation (H2AX139ph) may also be required for transcriptional repression of unsynapsed chromatin and meiotic sex chromosome inactivation (MSCI), whereby the X and Y chromosomes condense in pachytene to form the heterochromatic XY-body. During immunoglobulin class switch recombination in lymphocytes, Ser-140 phosphorylation (H2AX139ph) may occur at sites of DNA-recombination subsequent to activation of the activation-induced cytidine deaminase AICDA. Phosphorylation at Tyr-143 (H2AXY142ph) by BAZ1B/WSTF determines the relative recruitment of either DNA repair or pro-apoptotic factors. Phosphorylation at Tyr-143 (H2AXY142ph) favors the recruitment of APBB1/FE65 and pro-apoptosis factors such as MAPK8/JNK1, triggering apoptosis. In contrast, dephosphorylation of Tyr-143 by EYA proteins (EYA1, EYA2, EYA3 or EYA4) favors the recruitment of MDC1-containing DNA repair complexes to the tail of phosphorylated Ser-140 (H2AX139ph). Post-translationally, monoubiquitination of Lys-120 (H2AXK119ub) by RING1 and RNF2/RING2 complex gives a specific tag for epigenetic transcriptional repression. Following DNA double-strand breaks (DSBs), it is ubiquitinated through 'Lys-63' linkage of ubiquitin moieties by the E2 ligase UBE2N and the E3 ligases RNF8 and RNF168, leading to the recruitment of repair proteins to sites of DNA damage. Ubiquitination at Lys-14 and Lys-16 (H2AK13Ub and H2AK15Ub, respectively) in response to DNA damage is initiated by RNF168 that mediates monoubiquitination at these 2 sites, and 'Lys-63'-linked ubiquitin are then conjugated to monoubiquitin; RNF8 is able to extend 'Lys-63'-linked ubiquitin chains in vitro. H2AK119Ub and ionizing radiation-induced 'Lys-63'-linked ubiquitination (H2AK13Ub and H2AK15Ub) are distinct events. Acetylation at Lys-6 (H2AXK5ac) by KAT5 component of the NuA4 histone acetyltransferase complex promotes NBN/NBS1 assembly at the sites of DNA damage. Acetylation at Lys-37 increases in S and G2 phases. This modification has been proposed to play a role in DNA double-strand break repair.

The protein localises to the nucleus. Its subcellular location is the chromosome. Variant histone H2A which replaces conventional H2A in a subset of nucleosomes. Nucleosomes wrap and compact DNA into chromatin, limiting DNA accessibility to the cellular machineries which require DNA as a template. Histones thereby play a central role in transcription regulation, DNA repair, DNA replication and chromosomal stability. DNA accessibility is regulated via a complex set of post-translational modifications of histones, also called histone code, and nucleosome remodeling. Required for checkpoint-mediated arrest of cell cycle progression in response to low doses of ionizing radiation and for efficient repair of DNA double strand breaks (DSBs) specifically when modified by C-terminal phosphorylation. In Homo sapiens (Human), this protein is Histone H2AX.